The primary structure comprises 698 residues: Endogenous retrovirus group K member 21 Env polyprotein (698 aa).

The interval 1–25 is disordered; sequence MHPSEMQRKAPPRRRRHRNRAPLTH. The first 88 residues, 1 to 88, serve as a signal peptide directing secretion; the sequence is MHPSEMQRKA…ALMIVSMVVS (88 aa). The segment covering 10–20 has biased composition (basic residues); the sequence is APPRRRRHRNR. Residues 89 to 631 lie on the Extracellular side of the membrane; it reads LPMPAGAAAA…NLNPVTWVKT (543 aa). Residues Asn99, Asn127, Asn152, Asn273, Asn354, Asn371, and Asn460 are each glycosylated (N-linked (GlcNAc...) asparagine). A fusion peptide region spans residues 465–485; the sequence is FIFTLIAVIMGLIAVTAMAAV. N-linked (GlcNAc...) asparagine glycosylation is found at Asn506, Asn553, Asn565, and Asn584. The chain crosses the membrane as a helical span at residues 632-652; that stretch reads IGSTTIINLILILVCLFCLLL. Residues 653-698 lie on the Cytoplasmic side of the membrane; sequence VCRCTQQLRRDSDHRERAMMTMVVLSKRKGGNVGKSKRDQIVTVSV.

Belongs to the beta type-B retroviral envelope protein family. HERV class-II K(HML-2) env subfamily. As to quaternary structure, the surface (SU) and transmembrane (TM) proteins form a heterodimer. SU and TM are attached by noncovalent interactions or by a labile interchain disulfide bond. Post-translationally, specific enzymatic cleavages in vivo yield the mature SU and TM proteins.

It is found in the cell membrane. The protein resides in the virion. In terms of biological role, retroviral envelope proteins mediate receptor recognition and membrane fusion during early infection. Endogenous envelope proteins may have kept, lost or modified their original function during evolution. This endogenous envelope protein has lost its original fusogenic properties. SU mediates receptor recognition. Functionally, TM anchors the envelope heterodimer to the viral membrane through one transmembrane domain. The other hydrophobic domain, called fusion peptide, mediates fusion of the viral membrane with the target cell membrane. This Homo sapiens (Human) protein is Endogenous retrovirus group K member 21 Env polyprotein (ERVK-21).